Here is a 284-residue protein sequence, read N- to C-terminus: Homeobox protein six1 (284 aa).

A DNA-binding region (homeobox) is located at residues 124-183 (GEETSYCFKEKSRGVLREWYAHNPYPSPREKRELAEATGLTTTQVSNWFKNRRQRDRAAE). The tract at residues 168–230 (VSNWFKNRRQ…SPPQSPDQNS (63 aa)) is disordered. Over residues 179–190 (DRAAEAKERENT) the composition is skewed to basic and acidic residues. Low complexity predominate over residues 191-202 (ENNNTSTNKQNQ).

Belongs to the SIX/Sine oculis homeobox family.

Its subcellular location is the nucleus. It is found in the cytoplasm. Transcription factor that is involved in the regulation of cell proliferation, apoptosis and embryonic development. Depending on context, functions as a transcriptional repressor or activator. Required for the normal formation of pre-placodal ectoderm. The sequence is that of Homeobox protein six1 (six1) from Xenopus laevis (African clawed frog).